Here is a 277-residue protein sequence, read N- to C-terminus: MRGSDQKILLMVMVVVAVVAAAQGQEETTGFVTWGNNYYQTWGHQALVINKTSELQLTLDKNSGSGFESQLIYGSGYFNVRIKAPQTTSTGVITSFYLISRSSRHDELCFQILGKNGPPYLLNTNMYLYGEGGKDQRFRLWFDPTKDYHSYSFLWNPNQLVFYVDDTPIRVYSKNPDVYYPSVQTMFLMGSVQNGSIIDPKQMPYIAKFQASKIEGCKTEFMGIDKCTDPKFWWNRKQLSSKEKTLYLNARKTYLDYDYCSDRQRYPKVPQECGSYT.

A signal peptide spans 1–24; sequence MRGSDQKILLMVMVVVAVVAAAQG. Positions 32–209 constitute a GH16 domain; the sequence is VTWGNNYYQT…PKQMPYIAKF (178 aa). Asparagine 50 carries an N-linked (GlcNAc...) asparagine glycan. The active-site Nucleophile is glutamate 107. Xyloglucan is bound by residues 123–125 and 133–135; these read NTN and GKD. A glycan (N-linked (GlcNAc...) asparagine) is linked at asparagine 194. 2 cysteine pairs are disulfide-bonded: cysteine 217/cysteine 227 and cysteine 260/cysteine 273. A xyloglucan-binding site is contributed by arginine 265.

This sequence belongs to the glycosyl hydrolase 16 family. XTH group 1 subfamily. Post-translationally, contains at least one intrachain disulfide bond essential for its enzymatic activity.

The protein localises to the secreted. It is found in the cell wall. It localises to the extracellular space. Its subcellular location is the apoplast. The enzyme catalyses breaks a beta-(1-&gt;4) bond in the backbone of a xyloglucan and transfers the xyloglucanyl segment on to O-4 of the non-reducing terminal glucose residue of an acceptor, which can be a xyloglucan or an oligosaccharide of xyloglucan.. In terms of biological role, may catalyze xyloglucan endohydrolysis (XEH) and/or endotransglycosylation (XET). Cleaves and religates xyloglucan polymers, an essential constituent of the primary cell wall, and thereby participates in cell wall construction of growing tissues. In Arabidopsis thaliana (Mouse-ear cress), this protein is Probable xyloglucan endotransglucosylase/hydrolase protein 11 (XTH11).